A 452-amino-acid polypeptide reads, in one-letter code: MKVISNFQNKKILILGLAKSGEAAAKLLTKLGALVTVNDSKPFDQNPAAQALLEEGIKVICGSHPVELLDENFEYMVKNPGIPYDNPMVKRALAKEIPILTEVELAYFVSEAPIIGITGSNGKTTTTTMIADVLNAGGQSALLSGNIGYPASKVVQKAIAGDTLVMELSSFQLVGVNAFRPHIAVITNLMPTHLDYHGSFEDYVAAKWMIQAQMTESDYLILNANQEISATLAKTTKATVIPFSTQKVVDGAYLNDGILYFKEQAIIAATDLGVPGSHNIENALATIAVAKLSGIADDIIAQCLSHFGGVKHRLQRVGQIKDITFYNDSKSTNILATQKALSGFDNSRLILIAGGLDRGNEFDDLVPDLLGLKQMIILGESAERMKRAANKAEVSYLEARSVAEATELAFKLAQTGDTILLSPANASWDMYPNFEVRGDEFLATFDCLRGDA.

119–125 (GSNGKTT) lines the ATP pocket.

Belongs to the MurCDEF family.

The protein localises to the cytoplasm. The catalysed reaction is UDP-N-acetyl-alpha-D-muramoyl-L-alanine + D-glutamate + ATP = UDP-N-acetyl-alpha-D-muramoyl-L-alanyl-D-glutamate + ADP + phosphate + H(+). The protein operates within cell wall biogenesis; peptidoglycan biosynthesis. In terms of biological role, cell wall formation. Catalyzes the addition of glutamate to the nucleotide precursor UDP-N-acetylmuramoyl-L-alanine (UMA). The polypeptide is UDP-N-acetylmuramoylalanine--D-glutamate ligase (Streptococcus pyogenes serotype M4 (strain MGAS10750)).